Consider the following 341-residue polypeptide: Spore photoproduct lyase (341 aa).

Residues 76–304 enclose the Radical SAM core domain; it reads SKPSAEYAIP…ESKRKYKWGR (229 aa). 3 residues coordinate [4Fe-4S] cluster: C90, C94, and C97. A DNA-binding region (H-T-H motif) is located at residues 217–234; the sequence is QAARKVAGAGYKLGFVVA.

The protein belongs to the radical SAM superfamily. SPL family. Monomer or homodimer. The cofactor is [4Fe-4S] cluster. It depends on S-adenosyl-L-methionine as a cofactor.

The enzyme catalyses (5R)-5,6-dihydro-5-(thymidin-7-yl)thymidine in DNA = a thymidine dimer in DNA. Functionally, involved in repair of UV radiation-induced DNA damage during spore germination. Can repair thymine dimer 5-thyminyl-5,6-dihydrothymine (known as spore photoproduct (SP)) by in situ monomerization of SP to two thymines. The polypeptide is Spore photoproduct lyase (splG) (Geobacillus sp. (strain Y412MC61)).